A 212-amino-acid chain; its full sequence is External core antigen (212 aa).

An N-terminal signal peptide occupies residues 1-19; the sequence is MQLFHLCLIISCSCPTVQA. The segment at 25–27 is HBEAG; sequence GWL. Residues 165 to 212 are disordered; it reads NAPILSTLPETTVVRRRGRSPRRRTPSPRRRRSQSPRRRRSQSRESQC. The segment covering 178-205 has biased composition (basic residues); it reads VRRRGRSPRRRTPSPRRRRSQSPRRRRS. Residues 184 to 190 form a 1; half-length repeat; the sequence is SPRRRTP. A 3 X 8 AA repeats of S-P-R-R-R-R-S-Q region spans residues 184-206; that stretch reads SPRRRTPSPRRRRSQSPRRRRSQ. A propeptide spanning residues 184–212 is cleaved from the precursor; it reads SPRRRTPSPRRRRSQSPRRRRSQSRESQC. Repeat copies occupy residues 191 to 198 and 199 to 206.

It belongs to the orthohepadnavirus precore antigen family. In terms of assembly, homodimerizes. In terms of processing, phosphorylated. Post-translationally, cleaved by host furin.

It localises to the secreted. Its subcellular location is the host nucleus. Functionally, may regulate immune response to the intracellular capsid in acting as a T-cell tolerogen, by having an immunoregulatory effect which prevents destruction of infected cells by cytotoxic T-cells. This immune regulation may predispose to chronicity during perinatal infections and prevent severe liver injury during adult infections. The sequence is that of External core antigen from Homo sapiens (Human).